Consider the following 124-residue polypeptide: Small ribosomal subunit protein uS12 (124 aa).

At D89 the chain carries 3-methylthioaspartic acid.

Belongs to the universal ribosomal protein uS12 family. As to quaternary structure, part of the 30S ribosomal subunit. Contacts proteins S8 and S17. May interact with IF1 in the 30S initiation complex.

In terms of biological role, with S4 and S5 plays an important role in translational accuracy. Interacts with and stabilizes bases of the 16S rRNA that are involved in tRNA selection in the A site and with the mRNA backbone. Located at the interface of the 30S and 50S subunits, it traverses the body of the 30S subunit contacting proteins on the other side and probably holding the rRNA structure together. The combined cluster of proteins S8, S12 and S17 appears to hold together the shoulder and platform of the 30S subunit. This is Small ribosomal subunit protein uS12 from Blochmanniella floridana.